We begin with the raw amino-acid sequence, 585 residues long: uncharacterized protein (585 aa).

The next 6 membrane-spanning stretches (helical) occupy residues 18 to 38 (FMWS…YPII), 55 to 75 (AAWV…ATFF), 128 to 148 (FFLS…AISL), 150 to 170 (VMFY…PFLA), 238 to 258 (IWSA…VALL), and 276 to 296 (VAFF…GFVI). Positions 18-301 (FMWSLLAMLL…LGFVINMFSQ (284 aa)) constitute an ABC transmembrane type-1 domain. The ABC transporter domain maps to 335–570 (VHFKNVSLAY…GGYYKKIYDL (236 aa)). Position 369–376 (369–376 (GPTGSGKS)) interacts with ATP.

The protein belongs to the ABC transporter superfamily.

The protein localises to the cell membrane. This is an uncharacterized protein from Bacillus subtilis (strain 168).